We begin with the raw amino-acid sequence, 455 residues long: Putative PTS system EIIBC component YbbF (455 aa).

The PTS EIIB type-1 domain occupies His-8 to Ala-90. Residue Cys-30 is the Phosphocysteine intermediate; for EIIB activity of the active site. Positions Arg-116–Asp-455 constitute a PTS EIIC type-1 domain. Helical transmembrane passes span Ile-118–Ile-138, Ile-154–Gly-174, Phe-181–Ala-201, Leu-210–Thr-230, Val-250–Ile-270, Ile-281–Val-301, Leu-325–Val-345, Ala-355–Val-375, Tyr-399–Leu-419, and Ile-423–Ala-443.

The protein resides in the cell membrane. Its function is as follows. The phosphoenolpyruvate-dependent sugar phosphotransferase system (sugar PTS), a major carbohydrate active -transport system, catalyzes the phosphorylation of incoming sugar substrates concomitantly with their translocation across the cell membrane. This Bacillus subtilis (strain 168) protein is Putative PTS system EIIBC component YbbF (ybbF).